A 235-amino-acid chain; its full sequence is Phosphoribosylaminoimidazole-succinocarboxamide synthase (235 aa).

It belongs to the SAICAR synthetase family.

It catalyses the reaction 5-amino-1-(5-phospho-D-ribosyl)imidazole-4-carboxylate + L-aspartate + ATP = (2S)-2-[5-amino-1-(5-phospho-beta-D-ribosyl)imidazole-4-carboxamido]succinate + ADP + phosphate + 2 H(+). The protein operates within purine metabolism; IMP biosynthesis via de novo pathway; 5-amino-1-(5-phospho-D-ribosyl)imidazole-4-carboxamide from 5-amino-1-(5-phospho-D-ribosyl)imidazole-4-carboxylate: step 1/2. The protein is Phosphoribosylaminoimidazole-succinocarboxamide synthase of Streptococcus thermophilus (strain ATCC BAA-491 / LMD-9).